Here is an 811-residue protein sequence, read N- to C-terminus: Glycerol-3-phosphate acyltransferase (811 aa).

Positions 303 to 308 match the HXXXXD motif motif; it reads CHRSHM.

Belongs to the GPAT/DAPAT family.

The protein resides in the cell inner membrane. It carries out the reaction sn-glycerol 3-phosphate + an acyl-CoA = a 1-acyl-sn-glycero-3-phosphate + CoA. It functions in the pathway phospholipid metabolism; CDP-diacylglycerol biosynthesis; CDP-diacylglycerol from sn-glycerol 3-phosphate: step 1/3. The polypeptide is Glycerol-3-phosphate acyltransferase (Glaesserella parasuis serovar 5 (strain SH0165) (Haemophilus parasuis)).